The chain runs to 362 residues: Dihydroorotate dehydrogenase (quinone) (362 aa).

FMN is bound by residues Ala-62–Lys-66 and Thr-86. Lys-66 is a substrate binding site. Residue Asn-111–Phe-115 coordinates substrate. Residues Asn-139 and Asn-170 each coordinate FMN. Residue Asn-170 coordinates substrate. The active-site Nucleophile is the Ser-173. Substrate is bound at residue Asn-175. 2 residues coordinate FMN: Lys-215 and Ser-243. Position 244–245 (Asn-244–Thr-245) interacts with substrate. FMN is bound by residues Gly-266, Gly-295, and Tyr-316–Ser-317.

Belongs to the dihydroorotate dehydrogenase family. Type 2 subfamily. In terms of assembly, monomer. Requires FMN as cofactor.

It is found in the cell membrane. The enzyme catalyses (S)-dihydroorotate + a quinone = orotate + a quinol. It participates in pyrimidine metabolism; UMP biosynthesis via de novo pathway; orotate from (S)-dihydroorotate (quinone route): step 1/1. Its function is as follows. Catalyzes the conversion of dihydroorotate to orotate with quinone as electron acceptor. The polypeptide is Dihydroorotate dehydrogenase (quinone) (Rhizobium leguminosarum bv. trifolii (strain WSM2304)).